Reading from the N-terminus, the 269-residue chain is Ribosomal RNA small subunit methyltransferase J (269 aa).

S-adenosyl-L-methionine contacts are provided by residues 125–126 (ER) and Asp179.

The protein belongs to the methyltransferase superfamily. RsmJ family.

It localises to the cytoplasm. The catalysed reaction is guanosine(1516) in 16S rRNA + S-adenosyl-L-methionine = N(2)-methylguanosine(1516) in 16S rRNA + S-adenosyl-L-homocysteine + H(+). In terms of biological role, specifically methylates the guanosine in position 1516 of 16S rRNA. In Pseudomonas savastanoi pv. phaseolicola (strain 1448A / Race 6) (Pseudomonas syringae pv. phaseolicola (strain 1448A / Race 6)), this protein is Ribosomal RNA small subunit methyltransferase J.